The sequence spans 85 residues: Follicular dendritic cell secreted peptide (85 aa).

Positions 1-17 are cleaved as a signal peptide; the sequence is MKKVLLLITAILAVAVG. The interval 75–83 is O-glycosylated at one site; it reads SAPTTPLPS.

O-glycosylated with core 1 or possibly core 8 glycans. In terms of tissue distribution, abundantly expressed in tonsil, lymph node, and trachea; strong expression in prostate; lower expression in thyroid, stomach, and colon.

The protein resides in the secreted. In terms of biological role, can bind to the surface of B-lymphoma cells, but not T-lymphoma cells, consistent with a function as a secreted mediator acting upon B-cells. In Homo sapiens (Human), this protein is Follicular dendritic cell secreted peptide (FDCSP).